The chain runs to 504 residues: Peroxisomal N(1)-acetyl-spermine/spermidine oxidase (504 aa).

FAD is bound by residues A16, E37, R45, and 61–62 (HW). Residues H64 and V187 each coordinate substrate. V240 contributes to the FAD binding site. Position 313 (N313) interacts with substrate. Residues E465 and 474 to 475 (TT) contribute to the FAD site. The Microbody targeting signal signature appears at 502–504 (PRL).

The protein belongs to the flavin monoamine oxidase family. Monomer. It depends on FAD as a cofactor. In terms of tissue distribution, widely expressed at different developmental stages. Expressed at high level in the liver and the stomach, expressed at lower level in heart, spleen, thymus, small intestine, muscle, pancreas, uterus, and breast and expressed at very low level in brain, kidney, lung, testis, skin, adrenal gland and prostate gland.

Its subcellular location is the peroxisome. It is found in the cytoplasm. The catalysed reaction is N(1)-acetylspermine + O2 + H2O = 3-acetamidopropanal + spermidine + H2O2. It carries out the reaction N(1)-acetylspermidine + O2 + H2O = 3-acetamidopropanal + putrescine + H2O2. It catalyses the reaction N(1),N(12)-diacetylspermine + O2 + H2O = 3-acetamidopropanal + N(1)-acetylspermidine + H2O2. It functions in the pathway amine and polyamine metabolism; spermine metabolism. Flavoenzyme which catalyzes the oxidation of N(1)-acetylspermine to spermidine and is thus involved in the polyamine back-conversion. Can also oxidize N(1)-acetylspermidine to putrescine. Substrate specificity: N(1)-acetylspermine = N(1)-acetylspermidine &gt; N(1),N(12)-diacylspermine &gt;&gt; spermine. Does not oxidize spermidine. Plays an important role in the regulation of polyamine intracellular concentration and has the potential to act as a determinant of cellular sensitivity to the antitumor polyamine analogs. The sequence is that of Peroxisomal N(1)-acetyl-spermine/spermidine oxidase (Paox) from Mus musculus (Mouse).